The sequence spans 517 residues: GMP synthase [glutamine-hydrolyzing] (517 aa).

Residues 11-202 (KIIVLDFGSQ…AFDVCEAKAN (192 aa)) enclose the Glutamine amidotransferase type-1 domain. Cysteine 88 serves as the catalytic Nucleophile. Catalysis depends on residues histidine 176 and glutamate 178. In terms of domain architecture, GMPS ATP-PPase spans 203-392 (WSMNDFIDMQ…LGMPEDLVWR (190 aa)). Residue 230–236 (SGGVDSS) coordinates ATP.

As to quaternary structure, homodimer.

The enzyme catalyses XMP + L-glutamine + ATP + H2O = GMP + L-glutamate + AMP + diphosphate + 2 H(+). Its pathway is purine metabolism; GMP biosynthesis; GMP from XMP (L-Gln route): step 1/1. Its function is as follows. Catalyzes the synthesis of GMP from XMP. In Pediococcus pentosaceus (strain ATCC 25745 / CCUG 21536 / LMG 10740 / 183-1w), this protein is GMP synthase [glutamine-hydrolyzing].